Reading from the N-terminus, the 191-residue chain is Recombination protein RecR (191 aa).

The C4-type zinc-finger motif lies at 51 to 66 (CQTCFHLSADPECEIC). One can recognise a Toprim domain in the interval 74 to 168 (GVICVVADSR…SVSRIAYGLP (95 aa)).

The protein belongs to the RecR family.

Functionally, may play a role in DNA repair. It seems to be involved in an RecBC-independent recombinational process of DNA repair. It may act with RecF and RecO. The polypeptide is Recombination protein RecR (Synechococcus sp. (strain CC9605)).